A 180-amino-acid polypeptide reads, in one-letter code: 3-hydroxyanthranilate 3,4-dioxygenase (180 aa).

O2 is bound at residue Arg-46. Positions 50, 56, and 94 each coordinate Fe cation. Position 56 (Glu-56) interacts with substrate. Substrate is bound by residues Arg-98 and Glu-109. Fe cation contacts are provided by Cys-124, Cys-127, Cys-161, and Cys-164.

This sequence belongs to the 3-HAO family. As to quaternary structure, homodimer. Fe(2+) is required as a cofactor.

The enzyme catalyses 3-hydroxyanthranilate + O2 = (2Z,4Z)-2-amino-3-carboxymuconate 6-semialdehyde. The protein operates within cofactor biosynthesis; NAD(+) biosynthesis; quinolinate from L-kynurenine: step 3/3. Its function is as follows. Catalyzes the oxidative ring opening of 3-hydroxyanthranilate to 2-amino-3-carboxymuconate semialdehyde, which spontaneously cyclizes to quinolinate. This chain is 3-hydroxyanthranilate 3,4-dioxygenase, found in Jannaschia sp. (strain CCS1).